The following is a 232-amino-acid chain: Ribosomal RNA small subunit methyltransferase G (232 aa).

S-adenosyl-L-methionine contacts are provided by residues glycine 93, leucine 98, 144 to 145, and arginine 163; that span reads VE.

Belongs to the methyltransferase superfamily. RNA methyltransferase RsmG family.

It localises to the cytoplasm. The enzyme catalyses guanosine(527) in 16S rRNA + S-adenosyl-L-methionine = N(7)-methylguanosine(527) in 16S rRNA + S-adenosyl-L-homocysteine. Specifically methylates the N7 position of guanine in position 527 of 16S rRNA. This Burkholderia pseudomallei (strain 1106a) protein is Ribosomal RNA small subunit methyltransferase G.